The primary structure comprises 560 residues: Diphtheria toxin homolog CRM228 (560 aa).

The first 25 residues, 1-25 (MSRKLFASILIGALLGIGAPPSAHA), serve as a signal peptide directing secretion. The NAD(+) site is built by His-46 and Tyr-90. The active site involves Glu-173. 2 disulfide bridges follow: Cys-211–Cys-226 and Cys-486–Cys-496.

This Corynebacterium diphtheriae protein is Diphtheria toxin homolog CRM228.